The chain runs to 224 residues: MPDNPTGTLPEIILASASPRRRQILSEMGFVFSVCPSQAELYPDGSVAPAEFAVLNAQIKAKDIASKYSNGLIIAADTIVVDDFGILGKPSSKKVALNYLSRLGGKPHTVISSVCLLNAENGQIRSATCQSTLTMRPYTQAEAQRYVDSGLPMDKAGAYGIQDKEFNPAENIQGCYLNVVGLPACTLVRLINEMGFNPKLARNWKPEGDCTLCRIYRTEISRLR.

The Proton acceptor role is filled by D77.

It belongs to the Maf family. YhdE subfamily. A divalent metal cation serves as cofactor.

Its subcellular location is the cytoplasm. It catalyses the reaction dTTP + H2O = dTMP + diphosphate + H(+). The catalysed reaction is UTP + H2O = UMP + diphosphate + H(+). Its function is as follows. Nucleoside triphosphate pyrophosphatase that hydrolyzes dTTP and UTP. May have a dual role in cell division arrest and in preventing the incorporation of modified nucleotides into cellular nucleic acids. The sequence is that of dTTP/UTP pyrophosphatase from Dehalococcoides mccartyi (strain CBDB1).